Here is a 248-residue protein sequence, read N- to C-terminus: Probable transcriptional regulatory protein RL3983 (248 aa).

It belongs to the TACO1 family.

The protein resides in the cytoplasm. The protein is Probable transcriptional regulatory protein RL3983 of Rhizobium johnstonii (strain DSM 114642 / LMG 32736 / 3841) (Rhizobium leguminosarum bv. viciae).